A 547-amino-acid chain; its full sequence is CTP synthase (547 aa).

Residues 1 to 269 form an amidoligase domain region; that stretch reads MKTKFIFVTG…DQKVAIMLRL (269 aa). Residue S14 participates in CTP binding. S14 serves as a coordination point for UTP. ATP contacts are provided by residues 15–20 and D72; that span reads SLGKGL. D72 and E143 together coordinate Mg(2+). CTP is bound by residues 150-152, 190-195, and K226; these read DIE and KTKPTQ. Residues 190 to 195 and K226 contribute to the UTP site; that span reads KTKPTQ. The region spanning 294–547 is the Glutamine amidotransferase type-1 domain; that stretch reads TVAIVGKYVD…IGAAKKHAKV (254 aa). G356 provides a ligand contact to L-glutamine. C383 serves as the catalytic Nucleophile; for glutamine hydrolysis. L-glutamine is bound by residues 384–387, E407, and R475; that span reads LGMQ. Catalysis depends on residues H520 and E522.

It belongs to the CTP synthase family. As to quaternary structure, homotetramer.

It catalyses the reaction UTP + L-glutamine + ATP + H2O = CTP + L-glutamate + ADP + phosphate + 2 H(+). The enzyme catalyses L-glutamine + H2O = L-glutamate + NH4(+). The catalysed reaction is UTP + NH4(+) + ATP = CTP + ADP + phosphate + 2 H(+). Its pathway is pyrimidine metabolism; CTP biosynthesis via de novo pathway; CTP from UDP: step 2/2. Allosterically activated by GTP, when glutamine is the substrate; GTP has no effect on the reaction when ammonia is the substrate. The allosteric effector GTP functions by stabilizing the protein conformation that binds the tetrahedral intermediate(s) formed during glutamine hydrolysis. Inhibited by the product CTP, via allosteric rather than competitive inhibition. In terms of biological role, catalyzes the ATP-dependent amination of UTP to CTP with either L-glutamine or ammonia as the source of nitrogen. Regulates intracellular CTP levels through interactions with the four ribonucleotide triphosphates. The protein is CTP synthase of Desulfovibrio desulfuricans (strain ATCC 27774 / DSM 6949 / MB).